A 282-amino-acid chain; its full sequence is Large ribosomal subunit protein uL2 (282 aa).

Disordered stretches follow at residues 26-55 and 218-266; these read KKSP…RHRG and PHVR…HNKS. Over residues 34 to 43 the composition is skewed to polar residues; it reads LESQSHTAGR. The span at 254–266 shows a compositional bias: basic residues; that stretch reads TIGKKTRNKHNKS.

The protein belongs to the universal ribosomal protein uL2 family. As to quaternary structure, part of the 50S ribosomal subunit. Forms a bridge to the 30S subunit in the 70S ribosome.

One of the primary rRNA binding proteins. Required for association of the 30S and 50S subunits to form the 70S ribosome, for tRNA binding and peptide bond formation. It has been suggested to have peptidyltransferase activity; this is somewhat controversial. Makes several contacts with the 16S rRNA in the 70S ribosome. This is Large ribosomal subunit protein uL2 from Pediococcus pentosaceus (strain ATCC 25745 / CCUG 21536 / LMG 10740 / 183-1w).